Consider the following 153-residue polypeptide: 6,7-dimethyl-8-ribityllumazine synthase (153 aa).

Residues Phe22, 56–58 (AFE), and 80–82 (TVI) each bind 5-amino-6-(D-ribitylamino)uracil. 85 to 86 (AT) is a binding site for (2S)-2-hydroxy-3-oxobutyl phosphate. His88 functions as the Proton donor in the catalytic mechanism. Phe113 lines the 5-amino-6-(D-ribitylamino)uracil pocket. Arg127 serves as a coordination point for (2S)-2-hydroxy-3-oxobutyl phosphate.

The protein belongs to the DMRL synthase family.

It catalyses the reaction (2S)-2-hydroxy-3-oxobutyl phosphate + 5-amino-6-(D-ribitylamino)uracil = 6,7-dimethyl-8-(1-D-ribityl)lumazine + phosphate + 2 H2O + H(+). It functions in the pathway cofactor biosynthesis; riboflavin biosynthesis; riboflavin from 2-hydroxy-3-oxobutyl phosphate and 5-amino-6-(D-ribitylamino)uracil: step 1/2. Functionally, catalyzes the formation of 6,7-dimethyl-8-ribityllumazine by condensation of 5-amino-6-(D-ribitylamino)uracil with 3,4-dihydroxy-2-butanone 4-phosphate. This is the penultimate step in the biosynthesis of riboflavin. The chain is 6,7-dimethyl-8-ribityllumazine synthase from Clostridium perfringens (strain ATCC 13124 / DSM 756 / JCM 1290 / NCIMB 6125 / NCTC 8237 / Type A).